The sequence spans 292 residues: Elongation factor Ts (292 aa).

An involved in Mg(2+) ion dislocation from EF-Tu region spans residues 79–82; sequence TDFV.

Belongs to the EF-Ts family.

Its subcellular location is the cytoplasm. Functionally, associates with the EF-Tu.GDP complex and induces the exchange of GDP to GTP. It remains bound to the aminoacyl-tRNA.EF-Tu.GTP complex up to the GTP hydrolysis stage on the ribosome. The chain is Elongation factor Ts from Staphylococcus haemolyticus (strain JCSC1435).